The sequence spans 339 residues: Protein-glutamate methylesterase/protein-glutamine glutaminase (339 aa).

In terms of domain architecture, Response regulatory spans 2 to 119 (RIGVVNDMPM…EGNASSQSAR (118 aa)). The residue at position 53 (Asp53) is a 4-aspartylphosphate. Residues 149–338 (PTPRRLIAIG…SRIIEACERS (190 aa)) form the CheB-type methylesterase domain. Active-site residues include Ser160, His187, and Asp280.

The protein belongs to the CheB family. Post-translationally, phosphorylated by CheA. Phosphorylation of the N-terminal regulatory domain activates the methylesterase activity.

It localises to the cytoplasm. The enzyme catalyses [protein]-L-glutamate 5-O-methyl ester + H2O = L-glutamyl-[protein] + methanol + H(+). The catalysed reaction is L-glutaminyl-[protein] + H2O = L-glutamyl-[protein] + NH4(+). Its function is as follows. Involved in chemotaxis. Part of a chemotaxis signal transduction system that modulates chemotaxis in response to various stimuli. Catalyzes the demethylation of specific methylglutamate residues introduced into the chemoreceptors (methyl-accepting chemotaxis proteins or MCP) by CheR. Also mediates the irreversible deamidation of specific glutamine residues to glutamic acid. This Mesorhizobium japonicum (strain LMG 29417 / CECT 9101 / MAFF 303099) (Mesorhizobium loti (strain MAFF 303099)) protein is Protein-glutamate methylesterase/protein-glutamine glutaminase.